The following is a 128-amino-acid chain: RutC family protein BU371 (128 aa).

This sequence belongs to the RutC family.

This is RutC family protein BU371 from Buchnera aphidicola subsp. Acyrthosiphon pisum (strain APS) (Acyrthosiphon pisum symbiotic bacterium).